A 106-amino-acid polypeptide reads, in one-letter code: HIG1 domain family member 2A, mitochondrial (106 aa).

An N-acetylalanine modification is found at Ala-2. The HIG1 domain occupies 20–106; the sequence is VIEGLSPTVY…LAVTAMKSRP (87 aa). A run of 2 helical transmembrane segments spans residues 47 to 67 and 83 to 103; these read PVVPIGCLATAAALTYGLYSF and IAAQGFTVAAILLGLAVTAMK. Residues 104–106 are Mitochondrial matrix-facing; the sequence is SRP.

Associates with cytochrome c oxidase (COX, complex IV); proposed complex component.

The protein resides in the mitochondrion membrane. The protein localises to the mitochondrion inner membrane. Proposed subunit of cytochrome c oxidase (COX, complex IV), which is the terminal component of the mitochondrial respiratory chain that catalyzes the reduction of oxygen to water. May be involved in cytochrome c oxidase activity. May play a role in the assembly of respiratory supercomplexes. The sequence is that of HIG1 domain family member 2A, mitochondrial (HIGD2A) from Homo sapiens (Human).